The chain runs to 316 residues: MLP-like protein 34 (316 aa).

The protein belongs to the MLP family.

The polypeptide is MLP-like protein 34 (MLP34) (Arabidopsis thaliana (Mouse-ear cress)).